Reading from the N-terminus, the 606-residue chain is Zinc metalloproteinase-disintegrin-like HF3 (606 aa).

The signal sequence occupies residues 1 to 20; that stretch reads MIQVLLVTICLAAFPYQGSS. The propeptide occupies 21–190; the sequence is IILESGNVND…KKASQLVVTA (170 aa). The Peptidase M12B domain maps to 199–395; sequence KYIELVILAD…YKPQCILNEP (197 aa). Glutamate 202 contacts Ca(2+). An N-linked (GlcNAc...) asparagine glycan is attached at asparagine 259. Aspartate 286 lines the Ca(2+) pocket. Disulfide bonds link cysteine 310/cysteine 390, cysteine 350/cysteine 374, and cysteine 352/cysteine 357. Residue asparagine 313 is glycosylated (N-linked (GlcNAc...) asparagine). Residue histidine 335 coordinates Zn(2+). Residue glutamate 336 is part of the active site. Residues histidine 339 and histidine 345 each coordinate Zn(2+). N-linked (GlcNAc...) asparagine glycosylation is present at asparagine 373. Cysteine 390, asparagine 393, valine 405, asparagine 408, leucine 410, glutamate 412, glutamate 415, and aspartate 418 together coordinate Ca(2+). The 87-residue stretch at 403 to 489 folds into the Disintegrin domain; that stretch reads PPVCGNELLE…DCPTDDFKRN (87 aa). 14 cysteine pairs are disulfide-bonded: cysteine 406–cysteine 435, cysteine 417–cysteine 430, cysteine 419–cysteine 425, cysteine 429–cysteine 452, cysteine 443–cysteine 449, cysteine 448–cysteine 474, cysteine 461–cysteine 481, cysteine 468–cysteine 500, cysteine 493–cysteine 505, cysteine 512–cysteine 562, cysteine 527–cysteine 569, cysteine 540–cysteine 550, cysteine 557–cysteine 594, and cysteine 588–cysteine 599. A D/ECD-tripeptide motif is present at residues 467 to 469; it reads ECD. Positions 469, 472, and 484 each coordinate Ca(2+). Asparagine 519 carries N-linked (GlcNAc...) asparagine glycosylation. Residue asparagine 584 is glycosylated (N-linked (GlcNAc...) asparagine).

The protein belongs to the venom metalloproteinase (M12B) family. P-III subfamily. P-IIIa sub-subfamily. In terms of assembly, monomer. The cofactor is Zn(2+). As to expression, expressed by the venom gland.

The protein resides in the secreted. Its function is as follows. The metalloproteinase-disintegrin-like HF3 is a potent hemorrhagic toxin that activates macrophages for phagocytosis through integrin alpha-M/beta-2 (ITGAM/ITGB2). It inhibits collagen-induced platelet aggregation. This protein shows cleavage specificity for substrate for leucine at P1' position, followed by hydrophobic residues in P2'. In Bothrops jararaca (Jararaca), this protein is Zinc metalloproteinase-disintegrin-like HF3.